Here is a 456-residue protein sequence, read N- to C-terminus: UDP-N-acetylmuramate--L-alanine ligase (456 aa).

ATP is bound at residue 118 to 124 (GTHGKST).

Belongs to the MurCDEF family.

Its subcellular location is the cytoplasm. It carries out the reaction UDP-N-acetyl-alpha-D-muramate + L-alanine + ATP = UDP-N-acetyl-alpha-D-muramoyl-L-alanine + ADP + phosphate + H(+). It functions in the pathway cell wall biogenesis; peptidoglycan biosynthesis. Functionally, cell wall formation. This is UDP-N-acetylmuramate--L-alanine ligase from Paenarthrobacter aurescens (strain TC1).